Consider the following 905-residue polypeptide: Lateral signaling target protein 2 homolog (905 aa).

Lys87 participates in a covalent cross-link: Glycyl lysine isopeptide (Lys-Gly) (interchain with G-Cter in ubiquitin). The residue at position 334 (Ser334) is a Phosphoserine. Residues 354–441 (DEMSSLLSPP…RGQDGQSGEV (88 aa)) form a disordered region. Polar residues-rich tracts occupy residues 358–367 (SLLSPPSACQ) and 418–437 (PGNTFELTQGNAQQRGQDGQ). Thr512 carries the post-translational modification Phosphothreonine. Disordered regions lie at residues 516–552 (NPKSPTSQDSAVAAQEAPGHGTSPLEPRAEGTGDNSH) and 589–691 (PGSV…RGDV). Basic and acidic residues-rich tracts occupy residues 542–552 (PRAEGTGDNSH) and 605–615 (GGDKEPERIDE). The segment covering 647–656 (SGPQVDTASR) has biased composition (polar residues). Over residues 659–678 (GEGEVKGQPEPEARKQDPEK) the composition is skewed to basic and acidic residues. The segment at 835–895 (DEACGFCTSC…VCTHCYMFHV (61 aa)) adopts an FYVE-type zinc-finger fold. Zn(2+)-binding residues include Cys841, Cys844, Cys857, Cys860, Cys865, Cys868, and Cys887. Thr888 is subject to Phosphothreonine; by MAP2K. Cys890 contacts Zn(2+).

The protein belongs to the lst-2 family. In terms of assembly, interacts with TRIM3. In terms of processing, monoubiquitination at Lys-87 prevents binding to phosphatidylinositol 3-phosphate (PI3P) and localization to early endosome membranes. In terms of tissue distribution, enriched in brain (at protein level).

The protein localises to the cytoplasm. It is found in the cytosol. The protein resides in the early endosome membrane. Functionally, negative regulator of epidermal growth factor receptor (EGFR) signaling. Acts by promoting EGFR degradation in endosomes when not monoubiquitinated. This is Lateral signaling target protein 2 homolog (Zfyve28) from Mus musculus (Mouse).